Here is a 290-residue protein sequence, read N- to C-terminus: MNFVIATRRSKLAQVQTEIIIDLLNKKHDIECEKLLIETVGDKILEVSLDKIGGKGLFVKDIEVAMLEQRADAAVHSMKDVPYEMPKGFEIIAIPEREDVRDAFISLDNIKFKDLRKGAKIGTSSRRRAAQLKLLRPDLDIVPIRGNVQTRIEKIKKENLDGVILAVAGLKRVNLDHLITDYFDTKEMVPAIGQGALGIEVMEEHPKKELFKDLDHYNSKICVLAERAFMRELDGDCHSTIGAYASIKDNIMHIIGIFERKNKIIKKEITGTKDQYEKLGISLAEHILKD.

Position 237 is an S-(dipyrrolylmethanemethyl)cysteine (C237).

It belongs to the HMBS family. In terms of assembly, monomer. The cofactor is dipyrromethane.

The enzyme catalyses 4 porphobilinogen + H2O = hydroxymethylbilane + 4 NH4(+). The protein operates within porphyrin-containing compound metabolism; protoporphyrin-IX biosynthesis; coproporphyrinogen-III from 5-aminolevulinate: step 2/4. In terms of biological role, tetrapolymerization of the monopyrrole PBG into the hydroxymethylbilane pre-uroporphyrinogen in several discrete steps. The protein is Porphobilinogen deaminase of Clostridium botulinum (strain ATCC 19397 / Type A).